A 452-amino-acid polypeptide reads, in one-letter code: C4-dicarboxylate transport protein 1 (452 aa).

Helical transmembrane passes span 18-38 (FQVV…PSVG), 51-71 (LIKM…IAGM), 83-103 (LALL…LLLV), 151-171 (AFAK…GFAL), 191-211 (VLFT…FGAM), 229-249 (LMGA…GAIA), 304-324 (GYSF…VFIA), 337-357 (ITLL…TGSG), and 359-379 (IVLA…LALI). A disordered region spans residues 426–452 (WEEAQEPERVLDKKTEHMPVSAMSDAG). Residues 431–442 (EPERVLDKKTEH) are compositionally biased toward basic and acidic residues.

It belongs to the dicarboxylate/amino acid:cation symporter (DAACS) (TC 2.A.23) family.

It localises to the cell inner membrane. Its function is as follows. Responsible for the transport of dicarboxylates such as succinate, fumarate, and malate from the periplasm across the membrane. This chain is C4-dicarboxylate transport protein 1, found in Polaromonas naphthalenivorans (strain CJ2).